A 341-amino-acid polypeptide reads, in one-letter code: LRP2-binding protein (341 aa).

A TPR repeat occupies 56 to 89 (VQANFLLGQLFFEEGWYEDALLQFEKVKDEDNQA). Sel1-like repeat units lie at residues 90–122 (LYQA…TSDC), 130–165 (YAAA…DNGN), 170–203 (LKAQ…GNGS), 204–239 (LESQ…ERGN), 240–271 (VYAQ…SHDN), and 291–326 (AIAT…QLDA).

It localises to the cytoplasm. Functionally, may act as an adapter that regulates LRP2 function. This chain is LRP2-binding protein (lrp2bp), found in Xenopus laevis (African clawed frog).